We begin with the raw amino-acid sequence, 448 residues long: Histidinol dehydrogenase (448 aa).

Residues tyrosine 136, glutamine 197, and asparagine 220 each coordinate NAD(+). Residues serine 243, glutamine 265, and histidine 268 each contribute to the substrate site. Zn(2+) contacts are provided by glutamine 265 and histidine 268. Catalysis depends on proton acceptor residues glutamate 333 and histidine 334. Positions 334, 367, 421, and 426 each coordinate substrate. Aspartate 367 lines the Zn(2+) pocket. Histidine 426 contacts Zn(2+).

This sequence belongs to the histidinol dehydrogenase family. Zn(2+) is required as a cofactor.

It carries out the reaction L-histidinol + 2 NAD(+) + H2O = L-histidine + 2 NADH + 3 H(+). It functions in the pathway amino-acid biosynthesis; L-histidine biosynthesis; L-histidine from 5-phospho-alpha-D-ribose 1-diphosphate: step 9/9. Functionally, catalyzes the sequential NAD-dependent oxidations of L-histidinol to L-histidinaldehyde and then to L-histidine. This chain is Histidinol dehydrogenase, found in Pseudomonas syringae pv. tomato (strain ATCC BAA-871 / DC3000).